The sequence spans 405 residues: Secreted aspartic protease FUS4 (405 aa).

The first 24 residues, 1–24 (MLAIATLHVALQVFGAFSLSHAAA), serve as a signal peptide directing secretion. In terms of domain architecture, Peptidase A1 spans 49–400 (YLFNVTVGSP…NFEERSFGLA (352 aa)). N-linked (GlcNAc...) asparagine glycosylation is found at Asn52, Asn61, Asn107, and Asn123. An intrachain disulfide couples Cys318 to Cys356.

Belongs to the peptidase A1 family.

It is found in the secreted. Functionally, secreted aspartic protease; part of the gene cluster that mediates the biosynthesis of the mycotoxin fusarin C. Within the cluster, FUS1, FUS2, FUS8 and FUS9 are sufficient for fusarin production. The other FUS cluster members are not essential for fusarin C biosynthesis. This chain is Secreted aspartic protease FUS4, found in Gibberella fujikuroi (strain CBS 195.34 / IMI 58289 / NRRL A-6831) (Bakanae and foot rot disease fungus).